Consider the following 416-residue polypeptide: MDILNELEWRGAINQVTDEEGLRKLTSEDKIALYCGTDPTGDSLHIGHLIPFMILKRFQLAGHHPVIIIGGGTGAIGDPSGRKSERQLQTMDQVHHNEEALTAQMKKLFGTENFTIVNNYEWLSKISLLDFLRDYGKLFNINTMLNKEVVASRLDAGISFTEFTYQILQSVDFLHLYRHNDVQLQIGGSDQWGNITAGIDLIHKVEGPDTKVYGLTIPLMLKADGTKFGKTAGGAIWLDPEKTSPYEFYQFWINQDDRDVIKYLKYFTFLSKEEIDDLAEKVEKEPWKREAQRRLAQEVTKFVHGQEAVEEAERISKALFSGDVADLSVAEIEQGFKNMPSVDVENKKENIIIWLTDNGIEPSRRQARQDVSSGAIRINGEKVDDVDAEIDPQAHFAGKFVIVRKGKKHYYLARVK.

An L-tyrosine-binding site is contributed by Tyr34. Residues 39 to 48 (PTGDSLHIGH) carry the 'HIGH' region motif. The L-tyrosine site is built by Tyr165 and Gln169. A 'KMSKS' region motif is present at residues 227-231 (KFGKT). Lys230 is an ATP binding site. An S4 RNA-binding domain is found at 349–416 (ENIIIWLTDN…KKHYYLARVK (68 aa)).

Belongs to the class-I aminoacyl-tRNA synthetase family. TyrS type 1 subfamily. In terms of assembly, homodimer.

The protein localises to the cytoplasm. It catalyses the reaction tRNA(Tyr) + L-tyrosine + ATP = L-tyrosyl-tRNA(Tyr) + AMP + diphosphate + H(+). Its function is as follows. Catalyzes the attachment of tyrosine to tRNA(Tyr) in a two-step reaction: tyrosine is first activated by ATP to form Tyr-AMP and then transferred to the acceptor end of tRNA(Tyr). This is Tyrosine--tRNA ligase from Limosilactobacillus reuteri (strain DSM 20016) (Lactobacillus reuteri).